Reading from the N-terminus, the 297-residue chain is N-acetylmuramic acid 6-phosphate etherase (297 aa).

In terms of domain architecture, SIS spans 55 to 218; the sequence is AVAALKSGGR…STGAMVKFGK (164 aa). Glu-83 functions as the Proton donor in the catalytic mechanism. Glu-114 is an active-site residue.

The protein belongs to the GCKR-like family. MurNAc-6-P etherase subfamily. As to quaternary structure, homodimer.

It carries out the reaction N-acetyl-D-muramate 6-phosphate + H2O = N-acetyl-D-glucosamine 6-phosphate + (R)-lactate. It functions in the pathway amino-sugar metabolism; 1,6-anhydro-N-acetylmuramate degradation. It participates in amino-sugar metabolism; N-acetylmuramate degradation. Its pathway is cell wall biogenesis; peptidoglycan recycling. In terms of biological role, specifically catalyzes the cleavage of the D-lactyl ether substituent of MurNAc 6-phosphate, producing GlcNAc 6-phosphate and D-lactate. Together with AnmK, is also required for the utilization of anhydro-N-acetylmuramic acid (anhMurNAc) either imported from the medium or derived from its own cell wall murein, and thus plays a role in cell wall recycling. The protein is N-acetylmuramic acid 6-phosphate etherase of Salmonella dublin (strain CT_02021853).